A 436-amino-acid polypeptide reads, in one-letter code: Proline transporter 3 (436 aa).

Helical transmembrane passes span 29–49 (SWFQ…VLGY), 52–72 (TVMV…ATAI), 118–138 (LFMI…AVYV), 151–171 (FIAI…HLSA), 172–192 (LGIW…VAIV), 216–236 (LFTI…GMLP), 254–274 (LYFQ…IGYW), 296–316 (ALAN…FASP), 345–365 (GGYI…GDFM), 366–386 (SLTG…HMYY), and 405–425 (VVFF…LIAL).

The protein belongs to the amino acid/polyamine transporter 2 family. Amino acid/auxin permease (AAAP) (TC 2.A.18.3) subfamily. In terms of tissue distribution, expressed in epidermal cells of leaves, sepals and petals.

It localises to the cell membrane. Its function is as follows. Proline transporter that mediates proline and glycine betaine transport. When expressed in a heterologous system (yeast), imports L-proline, glycine betaine and GABA across the plasma membrane. This is Proline transporter 3 (PROT3) from Arabidopsis thaliana (Mouse-ear cress).